The chain runs to 261 residues: MMAHQHPYYLVEQSPWPLTGAISGLMMNLGLVLWFHTGNIILLFTGLLLLILTLVNWWRDIVREATFQGSHTAIVENGLRYPMILFITSEVCFFFAFFWAFFHSSLAPAVEIGVTWPPSGITPLNPFLVPLLNTAVLLSSGVTITWSHHSILAGNRNEAIQALFLTVVLGIYFTILQAWEYIDAPFTIADSVYGSTFFVATGFHGLHVIIGTTFLLVCLIRLSGHHFSTHHHFGFEAAAWYWHFVDVVWLFLYVCIYWWGS.

6 helical membrane-spanning segments follow: residues 31–51 (LVLWFHTGNIILLFTGLLLLI), 82–102 (PMILFITSEVCFFFAFFWAFF), 126–146 (PFLVPLLNTAVLLSSGVTITW), 159–179 (AIQALFLTVVLGIYFTILQAW), 197–217 (FFVATGFHGLHVIIGTTFLLV), and 239–259 (AWYWHFVDVVWLFLYVCIYWW).

The protein belongs to the cytochrome c oxidase subunit 3 family. Component of the cytochrome c oxidase (complex IV, CIV), a multisubunit enzyme composed of a catalytic core of 3 subunits and several supernumerary subunits. The complex exists as a monomer or a dimer and forms supercomplexes (SCs) in the inner mitochondrial membrane with ubiquinol-cytochrome c oxidoreductase (cytochrome b-c1 complex, complex III, CIII).

The protein localises to the mitochondrion inner membrane. It carries out the reaction 4 Fe(II)-[cytochrome c] + O2 + 8 H(+)(in) = 4 Fe(III)-[cytochrome c] + 2 H2O + 4 H(+)(out). In terms of biological role, component of the cytochrome c oxidase, the last enzyme in the mitochondrial electron transport chain which drives oxidative phosphorylation. The respiratory chain contains 3 multisubunit complexes succinate dehydrogenase (complex II, CII), ubiquinol-cytochrome c oxidoreductase (cytochrome b-c1 complex, complex III, CIII) and cytochrome c oxidase (complex IV, CIV), that cooperate to transfer electrons derived from NADH and succinate to molecular oxygen, creating an electrochemical gradient over the inner membrane that drives transmembrane transport and the ATP synthase. Cytochrome c oxidase is the component of the respiratory chain that catalyzes the reduction of oxygen to water. Electrons originating from reduced cytochrome c in the intermembrane space (IMS) are transferred via the dinuclear copper A center (CU(A)) of subunit 2 and heme A of subunit 1 to the active site in subunit 1, a binuclear center (BNC) formed by heme A3 and copper B (CU(B)). The BNC reduces molecular oxygen to 2 water molecules using 4 electrons from cytochrome c in the IMS and 4 protons from the mitochondrial matrix. This Paracentrotus lividus (Common sea urchin) protein is Cytochrome c oxidase subunit 3 (COIII).